Here is a 54-residue protein sequence, read N- to C-terminus: Protein Vpw (54 aa).

This chain is Protein Vpw (vpw), found in Bos taurus (Bovine).